The following is a 221-amino-acid chain: Probable endo-1,4-beta-xylanase B (221 aa).

Positions 1–19 (MVSFSSLALALSTVVGVLA) are cleaved as a signal peptide. Residues 33–221 (QLTHSQTGTK…SSGSATMTVS (189 aa)) form the GH11 domain. The active-site Nucleophile is Glu-117. Catalysis depends on Glu-208, which acts as the Proton donor.

It belongs to the glycosyl hydrolase 11 (cellulase G) family.

The protein resides in the secreted. It carries out the reaction Endohydrolysis of (1-&gt;4)-beta-D-xylosidic linkages in xylans.. Its pathway is glycan degradation; xylan degradation. In terms of biological role, endo-1,4-beta-xylanase involved in the hydrolysis of xylan, a major structural heterogeneous polysaccharide found in plant biomass representing the second most abundant polysaccharide in the biosphere, after cellulose. The chain is Probable endo-1,4-beta-xylanase B (xlnB) from Aspergillus clavatus (strain ATCC 1007 / CBS 513.65 / DSM 816 / NCTC 3887 / NRRL 1 / QM 1276 / 107).